Reading from the N-terminus, the 368-residue chain is 7,8-didemethyl-8-hydroxy-5-deazariboflavin synthase (368 aa).

The Radical SAM core domain maps to 36 to 272 (LSYCRNVFLP…EEVSVQVPPN (237 aa)). Residues Cys-50, Cys-54, and Cys-57 each contribute to the [4Fe-4S] cluster site.

It belongs to the radical SAM superfamily. CofG family. Consists of two subunits, CofG and CofH. It depends on [4Fe-4S] cluster as a cofactor.

The enzyme catalyses 5-amino-5-(4-hydroxybenzyl)-6-(D-ribitylimino)-5,6-dihydrouracil + S-adenosyl-L-methionine = 7,8-didemethyl-8-hydroxy-5-deazariboflavin + 5'-deoxyadenosine + L-methionine + NH4(+) + H(+). It participates in cofactor biosynthesis; coenzyme F0 biosynthesis. Catalyzes the radical-mediated synthesis of 7,8-didemethyl-8-hydroxy-5-deazariboflavin from 5-amino-5-(4-hydroxybenzyl)-6-(D-ribitylimino)-5,6-dihydrouracil. The chain is 7,8-didemethyl-8-hydroxy-5-deazariboflavin synthase from Haloarcula marismortui (strain ATCC 43049 / DSM 3752 / JCM 8966 / VKM B-1809) (Halobacterium marismortui).